The following is a 101-amino-acid chain: Gamma-secretase subunit PEN-2 (101 aa).

Residues 1 to 17 (MNLERVSNEEKLNLCRK) lie on the Cytoplasmic side of the membrane. Positions 18–36 (YYLGGFAFLPFLWLVNIFW) form an intramembrane region, helical. The Cytoplasmic portion of the chain corresponds to 37-57 (FFREAFLVPAYTEQSQIKGYV). Residues 58–78 (WRSAVGFLFWVIVLTSWITIF) traverse the membrane as a helical segment. Residues 79–101 (QIYRPRWGALGDYLSFTIPLGTP) are Lumenal-facing.

It belongs to the PEN-2 family. As to quaternary structure, the functional gamma-secretase complex is composed of at least four polypeptides: a presenilin homodimer (PSEN1 or PSEN2), nicastrin (NCSTN), APH1 (APH1A or APH1B) and PSENEN. In terms of tissue distribution, widely expressed. Expressed in leukocytes, lung, placenta, small intestine, liver, kidney, spleen thymus, skeletal muscle, heart and brain.

The protein resides in the endoplasmic reticulum membrane. It is found in the golgi apparatus. Its subcellular location is the golgi stack membrane. The protein localises to the cell membrane. It localises to the membrane. Functionally, essential subunit of the gamma-secretase complex, an endoprotease complex that catalyzes the intramembrane cleavage of integral membrane proteins such as Notch receptors and APP (amyloid-beta precursor protein). The gamma-secretase complex plays a role in Notch and Wnt signaling cascades and regulation of downstream processes via its role in processing key regulatory proteins, and by regulating cytosolic CTNNB1 levels. PSENEN modulates both endoproteolysis of presenilin and gamma-secretase activity. This chain is Gamma-secretase subunit PEN-2 (PSENEN), found in Homo sapiens (Human).